A 414-amino-acid chain; its full sequence is Histidine--tRNA ligase (414 aa).

This sequence belongs to the class-II aminoacyl-tRNA synthetase family. Homodimer.

It localises to the cytoplasm. The enzyme catalyses tRNA(His) + L-histidine + ATP = L-histidyl-tRNA(His) + AMP + diphosphate + H(+). This is Histidine--tRNA ligase from Synechococcus sp. (strain RCC307).